Here is a 407-residue protein sequence, read N- to C-terminus: Peptidase T (407 aa).

Zn(2+) is bound at residue His-77. The active site involves Asp-79. Asp-138 is a Zn(2+) binding site. Glu-172 acts as the Proton acceptor in catalysis. Zn(2+)-binding residues include Glu-173, Asp-195, and His-377.

This sequence belongs to the peptidase M20B family. Zn(2+) serves as cofactor.

Its subcellular location is the cytoplasm. The catalysed reaction is Release of the N-terminal residue from a tripeptide.. Cleaves the N-terminal amino acid of tripeptides. In Aeromonas hydrophila subsp. hydrophila (strain ATCC 7966 / DSM 30187 / BCRC 13018 / CCUG 14551 / JCM 1027 / KCTC 2358 / NCIMB 9240 / NCTC 8049), this protein is Peptidase T.